The sequence spans 430 residues: UDP-N-acetylmuramoylalanine--D-glutamate ligase (430 aa).

Residue 109–115 participates in ATP binding; it reads GTDGKST.

Belongs to the MurCDEF family.

It is found in the cytoplasm. The catalysed reaction is UDP-N-acetyl-alpha-D-muramoyl-L-alanine + D-glutamate + ATP = UDP-N-acetyl-alpha-D-muramoyl-L-alanyl-D-glutamate + ADP + phosphate + H(+). It participates in cell wall biogenesis; peptidoglycan biosynthesis. Functionally, cell wall formation. Catalyzes the addition of glutamate to the nucleotide precursor UDP-N-acetylmuramoyl-L-alanine (UMA). The chain is UDP-N-acetylmuramoylalanine--D-glutamate ligase from Thermotoga maritima (strain ATCC 43589 / DSM 3109 / JCM 10099 / NBRC 100826 / MSB8).